Reading from the N-terminus, the 242-residue chain is uncharacterized protein (242 aa).

8-15 is an NADP(+) binding site; it reads TGASGGIG. Ser-137 contacts substrate. Tyr-150 serves as the catalytic Proton acceptor.

Belongs to the short-chain dehydrogenases/reductases (SDR) family.

This is an uncharacterized protein from Bacillus subtilis (strain 168).